A 243-amino-acid chain; its full sequence is tRNA (guanine-N(1)-)-methyltransferase (243 aa).

S-adenosyl-L-methionine is bound by residues Gly-113 and 133 to 138 (IGDFVL).

The protein belongs to the RNA methyltransferase TrmD family. Homodimer.

The protein localises to the cytoplasm. It carries out the reaction guanosine(37) in tRNA + S-adenosyl-L-methionine = N(1)-methylguanosine(37) in tRNA + S-adenosyl-L-homocysteine + H(+). Its function is as follows. Specifically methylates guanosine-37 in various tRNAs. The polypeptide is tRNA (guanine-N(1)-)-methyltransferase (Bacillus velezensis (strain DSM 23117 / BGSC 10A6 / LMG 26770 / FZB42) (Bacillus amyloliquefaciens subsp. plantarum)).